The following is a 185-amino-acid chain: MAVMPDKWIREKAESFGMIEPFVDHKSSKGVMSFGLSSYGYDARVDNKFKIFTNVNSAVVDPKDFSKNSFIDKETDVCIIPPNSFALASTVEYFHIPRDVLAICVGKSTYARCGIIVNVTPLEPGWKGHVTLEFSNTTPLPAKIYANEGACQFVFLSGESECEKSYDDIKGKYMNQHGITLPLVK.

DCTP is bound by residues 107–112 (KSTYAR), 131–133 (TLE), Gln152, Tyr166, and Gln176. Residue Glu133 is the Proton donor/acceptor of the active site.

This sequence belongs to the dCTP deaminase family. Homotrimer.

The catalysed reaction is dCTP + H2O + H(+) = dUTP + NH4(+). Its pathway is pyrimidine metabolism; dUMP biosynthesis; dUMP from dCTP (dUTP route): step 1/2. Its function is as follows. Catalyzes the deamination of dCTP to dUTP. The sequence is that of dCTP deaminase from Wolbachia sp. subsp. Brugia malayi (strain TRS).